The sequence spans 327 residues: GMP reductase (327 aa).

Cysteine 176 acts as the Thioimidate intermediate in catalysis. Residue 205 to 228 coordinates NADP(+); it reads IIADGGIRTHGDIAKSIRFGASMV.

Belongs to the IMPDH/GMPR family. GuaC type 2 subfamily.

The enzyme catalyses IMP + NH4(+) + NADP(+) = GMP + NADPH + 2 H(+). Its function is as follows. Catalyzes the irreversible NADPH-dependent deamination of GMP to IMP. It functions in the conversion of nucleobase, nucleoside and nucleotide derivatives of G to A nucleotides, and in maintaining the intracellular balance of A and G nucleotides. The sequence is that of GMP reductase from Streptococcus suis (strain 98HAH33).